Reading from the N-terminus, the 123-residue chain is Ribosome-binding factor A (123 aa).

This sequence belongs to the RbfA family. As to quaternary structure, monomer. Binds 30S ribosomal subunits, but not 50S ribosomal subunits or 70S ribosomes.

It localises to the cytoplasm. Its function is as follows. One of several proteins that assist in the late maturation steps of the functional core of the 30S ribosomal subunit. Associates with free 30S ribosomal subunits (but not with 30S subunits that are part of 70S ribosomes or polysomes). Required for efficient processing of 16S rRNA. May interact with the 5'-terminal helix region of 16S rRNA. This Prochlorococcus marinus (strain NATL1A) protein is Ribosome-binding factor A.